Reading from the N-terminus, the 119-residue chain is UPF0102 protein CGSHiGG_01960 (119 aa).

Belongs to the UPF0102 family.

The polypeptide is UPF0102 protein CGSHiGG_01960 (Haemophilus influenzae (strain PittGG)).